We begin with the raw amino-acid sequence, 343 residues long: Glyceraldehyde-3-phosphate dehydrogenase 1 (343 aa).

Residues 13 to 14, aspartate 35, arginine 79, and serine 121 each bind NAD(+); that span reads RI. Residues 154–156, threonine 185, 214–215, and arginine 237 each bind D-glyceraldehyde 3-phosphate; these read SCT and TG. The Nucleophile role is filled by cysteine 155. Asparagine 319 contacts NAD(+).

Belongs to the glyceraldehyde-3-phosphate dehydrogenase family. In terms of assembly, homotetramer.

The protein localises to the cytoplasm. It carries out the reaction D-glyceraldehyde 3-phosphate + phosphate + NAD(+) = (2R)-3-phospho-glyceroyl phosphate + NADH + H(+). It participates in carbohydrate degradation; glycolysis; pyruvate from D-glyceraldehyde 3-phosphate: step 1/5. Its function is as follows. Catalyzes the oxidative phosphorylation of glyceraldehyde 3-phosphate (G3P) to 1,3-bisphosphoglycerate (BPG) using the cofactor NAD. The first reaction step involves the formation of a hemiacetal intermediate between G3P and a cysteine residue, and this hemiacetal intermediate is then oxidized to a thioester, with concomitant reduction of NAD to NADH. The reduced NADH is then exchanged with the second NAD, and the thioester is attacked by a nucleophilic inorganic phosphate to produce BPG. The chain is Glyceraldehyde-3-phosphate dehydrogenase 1 (gap1) from Nostoc sp. (strain PCC 7120 / SAG 25.82 / UTEX 2576).